Consider the following 686-residue polypeptide: Putative cuticle collagen 99 (686 aa).

2 disordered regions span residues P42–P79 and G163–A444. A compositionally biased stretch (pro residues) spans P67 to P79. 3 triple-helical region regions span residues G142–R201, G230–G263, and G268–D296. The span at P231–P243 shows a compositional bias: pro residues. The segment covering R246 to R256 has biased composition (basic and acidic residues). Over residues G306–Q318 the composition is skewed to low complexity. Composition is skewed to basic and acidic residues over residues E361–D373 and R401–R417. Positions G394–G439 are triple-helical region. N446 and N535 each carry an N-linked (GlcNAc...) asparagine glycan. Residues K475–Y650 are disordered. 3 triple-helical region regions span residues P479–Q536, G538–M576, and G577–D636. Residues R540–P549 show a composition bias toward pro residues. The span at Q563–P581 shows a compositional bias: low complexity.

This sequence belongs to the cuticular collagen family. In terms of assembly, collagen polypeptide chains are complexed within the cuticle by disulfide bonds and other types of covalent cross-links.

Its function is as follows. Nematode cuticles are composed largely of collagen-like proteins. The cuticle functions both as an exoskeleton and as a barrier to protect the worm from its environment. This Caenorhabditis briggsae protein is Putative cuticle collagen 99.